The primary structure comprises 316 residues: Putative phosphoribosylaminoimidazole-succinocarboxamide synthase 2 (316 aa).

It belongs to the SAICAR synthetase family.

The catalysed reaction is 5-amino-1-(5-phospho-D-ribosyl)imidazole-4-carboxylate + L-aspartate + ATP = (2S)-2-[5-amino-1-(5-phospho-beta-D-ribosyl)imidazole-4-carboxamido]succinate + ADP + phosphate + 2 H(+). Its pathway is purine metabolism; IMP biosynthesis via de novo pathway; 5-amino-1-(5-phospho-D-ribosyl)imidazole-4-carboxamide from 5-amino-1-(5-phospho-D-ribosyl)imidazole-4-carboxylate: step 1/2. The chain is Putative phosphoribosylaminoimidazole-succinocarboxamide synthase 2 (purC2) from Agrobacterium fabrum (strain C58 / ATCC 33970) (Agrobacterium tumefaciens (strain C58)).